The following is a 156-amino-acid chain: MQAAKTQDELVKTFKAILKEERFGSQSEIVIALQAEGYNNINQSKVSRMLSKFGAVRTRNAKQEMVYCLPAELGVPTAGSPLKNLVLDVDHNQAMIVVRTSPGAAQLIARLLDSIGKPEGILGTIAGDDTIFITPSNIQEIDKTLITVKSLFNFTN.

The protein belongs to the ArgR family.

It is found in the cytoplasm. The protein operates within amino-acid biosynthesis; L-arginine biosynthesis [regulation]. Regulates arginine biosynthesis genes. The sequence is that of Arginine repressor from Shewanella woodyi (strain ATCC 51908 / MS32).